Consider the following 654-residue polypeptide: Coiled-coil domain-containing protein 30 (654 aa).

Residues 38–65 form a disordered region; it reads TLESRRDPNSSLQKEFPQHQDEDQSRAA. Residues 53 to 62 show a composition bias toward basic and acidic residues; that stretch reads FPQHQDEDQS. Coiled-coil stretches lie at residues 97-244 and 276-559; these read REER…LDNA and KSQQ…QIIR. The interval 614-654 is disordered; that stretch reads AAAIPKSPEPLSRSQDSESGYINVTSLKETHNTQGDQKPEL. Residues 625-654 show a composition bias toward polar residues; sequence SRSQDSESGYINVTSLKETHNTQGDQKPEL.

The protein belongs to the prefoldin subunit beta family.

The protein is Coiled-coil domain-containing protein 30 (Ccdc30) of Mus musculus (Mouse).